The chain runs to 429 residues: 3-phosphoshikimate 1-carboxyvinyltransferase (429 aa).

3-phosphoshikimate contacts are provided by K20, S21, and R25. Residue K20 coordinates phosphoenolpyruvate. 2 residues coordinate phosphoenolpyruvate: G89 and R118. S164, S165, Q166, S192, D311, and K338 together coordinate 3-phosphoshikimate. Residue Q166 participates in phosphoenolpyruvate binding. The Proton acceptor role is filled by D311. The phosphoenolpyruvate site is built by R342 and R384.

This sequence belongs to the EPSP synthase family. As to quaternary structure, monomer.

It localises to the cytoplasm. The enzyme catalyses 3-phosphoshikimate + phosphoenolpyruvate = 5-O-(1-carboxyvinyl)-3-phosphoshikimate + phosphate. The protein operates within metabolic intermediate biosynthesis; chorismate biosynthesis. Functionally, catalyzes the transfer of the enolpyruvyl moiety of phosphoenolpyruvate (PEP) to the 5-hydroxyl of shikimate-3-phosphate (S3P) to produce enolpyruvyl shikimate-3-phosphate and inorganic phosphate. This Methanococcus maripaludis (strain DSM 14266 / JCM 13030 / NBRC 101832 / S2 / LL) protein is 3-phosphoshikimate 1-carboxyvinyltransferase.